The following is a 139-amino-acid chain: Putative pre-16S rRNA nuclease (139 aa).

Belongs to the YqgF nuclease family.

It is found in the cytoplasm. In terms of biological role, could be a nuclease involved in processing of the 5'-end of pre-16S rRNA. The chain is Putative pre-16S rRNA nuclease from Rippkaea orientalis (strain PCC 8801 / RF-1) (Cyanothece sp. (strain PCC 8801)).